Consider the following 407-residue polypeptide: Putative colanic acid biosynthesis glycosyl transferase WcaI (407 aa).

Its pathway is slime biogenesis; slime polysaccharide biosynthesis. This is Putative colanic acid biosynthesis glycosyl transferase WcaI (wcaI) from Escherichia coli (strain K12).